Here is a 131-residue protein sequence, read N- to C-terminus: Ribonuclease VapC13 (131 aa).

Positions 2–128 constitute a PINc domain; sequence ILVDSNIPMY…RGFDSYPGIK (127 aa). 2 residues coordinate Mg(2+): Asp5 and Asp99.

This sequence belongs to the PINc/VapC protein family. The cofactor is Mg(2+).

The protein resides in the secreted. Its function is as follows. Toxic component of a type II toxin-antitoxin (TA) system. An RNase. The cognate antitoxin is VapB13. In Mycobacterium tuberculosis (strain ATCC 25618 / H37Rv), this protein is Ribonuclease VapC13.